The sequence spans 1022 residues: Integrator complex subunit 4 (1022 aa).

Threonine 148 and lysine 184 together coordinate 1D-myo-inositol hexakisphosphate. A disordered region spans residues lysine 818–aspartate 840.

The protein belongs to the Integrator subunit 4 family. As to quaternary structure, belongs to the multiprotein complex Integrator, at least composed of IntS1, IntS2, IntS3, IntS4, omd/IntS5, IntS6, defl/IntS7, IntS8, IntS9, IntS10, IntS11, IntS12, asun/IntS13, IntS14 and IntS15. The core complex associates with protein phosphatase 2A subunits mts/PP2A and Pp2A-29B, to form the Integrator-PP2A (INTAC) complex. IntS4 is part of the RNA endonuclease subcomplex, composed of IntS4, IntS9, IntS11 and inositol hexakisphosphate (InsP6).

The protein resides in the nucleus. Its function is as follows. Component of the integrator complex, a multiprotein complex that terminates RNA polymerase II (Pol II) transcription in the promoter-proximal region of genes. The integrator complex provides a quality checkpoint during transcription elongation by driving premature transcription termination of transcripts that are unfavorably configured for transcriptional elongation: the complex terminates transcription by (1) catalyzing dephosphorylation of the C-terminal domain (CTD) of Pol II subunit Polr2A/Rbp1 and Spt5, and (2) degrading the exiting nascent RNA transcript via endonuclease activity. The integrator complex is also involved in the 3'-end processing of the U7 snRNA, and also the spliceosomal snRNAs U1, U2, U4 and U5. The polypeptide is Integrator complex subunit 4 (Drosophila melanogaster (Fruit fly)).